Consider the following 918-residue polypeptide: Cap-specific mRNA (nucleoside-2'-O-)-methyltransferase 1 (918 aa).

Residues 1–18 are compositionally biased toward basic and acidic residues; the sequence is MADRKSDEGEDEYQHKEQ. Disordered stretches follow at residues 1–56 and 62–81; these read MADR…EERA and KRGYQAGDDEEDDFTAEEEP. A compositionally biased stretch (polar residues) spans 19 to 30; it reads MVTNRTSSFQPK. Positions 43-56 are enriched in basic and acidic residues; sequence RAADRREEFMEERA. Residues 68-80 show a composition bias toward acidic residues; that stretch reads GDDEEDDFTAEEE. The G-patch domain occupies 86 to 132; sequence PLTVAERLMAAMGHKAGEGLGKHGQGISEPIASSTQRGRTGLGHNAG. A RrmJ-type SAM-dependent 2'-O-MTase domain is found at 236-465; the sequence is FFQNRAAMKT…ERYITCKGLR (230 aa). S-adenosyl-L-methionine is bound by residues G298 and D379. The active-site Proton acceptor is the K419.

The enzyme catalyses a 5'-end (N(7)-methyl 5'-triphosphoguanosine)-ribonucleoside in mRNA + S-adenosyl-L-methionine = a 5'-end (N(7)-methyl 5'-triphosphoguanosine)-(2'-O-methyl-ribonucleoside) in mRNA + S-adenosyl-L-homocysteine + H(+). Functionally, S-adenosyl-L-methionine-dependent methyltransferase that mediates mRNA cap1 2'-O-ribose methylation to the 5'-cap structure of mRNAs. Methylates the ribose of the first nucleotide of a m(7)GpppG-capped mRNA to produce m(7)GpppNmp (cap1). Cap1 modification is linked to higher levels of translation. The protein is Cap-specific mRNA (nucleoside-2'-O-)-methyltransferase 1 of Caenorhabditis elegans.